The primary structure comprises 188 residues: Elongation factor P (188 aa).

Lysine 34 is subject to N6-(3,6-diaminohexanoyl)-5-hydroxylysine.

Belongs to the elongation factor P family. Post-translationally, may be beta-lysylated on the epsilon-amino group of Lys-34 by the combined action of EpmA and EpmB, and then hydroxylated on the C5 position of the same residue by EpmC (if this protein is present). Lysylation is critical for the stimulatory effect of EF-P on peptide-bond formation. The lysylation moiety may extend toward the peptidyltransferase center and stabilize the terminal 3-CCA end of the tRNA. Hydroxylation of the C5 position on Lys-34 may allow additional potential stabilizing hydrogen-bond interactions with the P-tRNA.

Its subcellular location is the cytoplasm. It functions in the pathway protein biosynthesis; polypeptide chain elongation. In terms of biological role, involved in peptide bond synthesis. Alleviates ribosome stalling that occurs when 3 or more consecutive Pro residues or the sequence PPG is present in a protein, possibly by augmenting the peptidyl transferase activity of the ribosome. Modification of Lys-34 is required for alleviation. The sequence is that of Elongation factor P from Serratia proteamaculans (strain 568).